The chain runs to 285 residues: Diaminopimelate epimerase (285 aa).

2 residues coordinate substrate: Asn-15 and Asn-68. The Proton donor role is filled by Cys-77. Residues 78–79 (GN), Asn-165, Asn-201, and 219–220 (ER) contribute to the substrate site. The active-site Proton acceptor is Cys-228. 229–230 (GT) contacts substrate.

It belongs to the diaminopimelate epimerase family. In terms of assembly, homodimer.

It is found in the cytoplasm. The enzyme catalyses (2S,6S)-2,6-diaminopimelate = meso-2,6-diaminopimelate. It participates in amino-acid biosynthesis; L-lysine biosynthesis via DAP pathway; DL-2,6-diaminopimelate from LL-2,6-diaminopimelate: step 1/1. Catalyzes the stereoinversion of LL-2,6-diaminopimelate (L,L-DAP) to meso-diaminopimelate (meso-DAP), a precursor of L-lysine and an essential component of the bacterial peptidoglycan. The chain is Diaminopimelate epimerase from Synechococcus sp. (strain JA-3-3Ab) (Cyanobacteria bacterium Yellowstone A-Prime).